Here is a 203-residue protein sequence, read N- to C-terminus: Orotate phosphoribosyltransferase (203 aa).

Residues arginine 94, lysine 95, lysine 98, histidine 100, and 119–127 (DDVATTGGS) contribute to the 5-phospho-alpha-D-ribose 1-diphosphate site. Orotate is bound by residues threonine 123 and arginine 151.

The protein belongs to the purine/pyrimidine phosphoribosyltransferase family. PyrE subfamily. Homodimer. Mg(2+) serves as cofactor.

The enzyme catalyses orotidine 5'-phosphate + diphosphate = orotate + 5-phospho-alpha-D-ribose 1-diphosphate. The protein operates within pyrimidine metabolism; UMP biosynthesis via de novo pathway; UMP from orotate: step 1/2. Functionally, catalyzes the transfer of a ribosyl phosphate group from 5-phosphoribose 1-diphosphate to orotate, leading to the formation of orotidine monophosphate (OMP). The protein is Orotate phosphoribosyltransferase of Staphylothermus marinus (strain ATCC 43588 / DSM 3639 / JCM 9404 / F1).